Here is a 180-residue protein sequence, read N- to C-terminus: ATP-dependent protease subunit HslV (180 aa).

The active site involves T5. Residues G165, C168, and T171 each contribute to the Na(+) site.

Belongs to the peptidase T1B family. HslV subfamily. As to quaternary structure, a double ring-shaped homohexamer of HslV is capped on each side by a ring-shaped HslU homohexamer. The assembly of the HslU/HslV complex is dependent on binding of ATP.

It is found in the cytoplasm. The catalysed reaction is ATP-dependent cleavage of peptide bonds with broad specificity.. Allosterically activated by HslU binding. Protease subunit of a proteasome-like degradation complex believed to be a general protein degrading machinery. This chain is ATP-dependent protease subunit HslV, found in Helicobacter pylori (strain G27).